A 332-amino-acid chain; its full sequence is Anthranilate phosphoribosyltransferase (332 aa).

Residues Gly79, Gly82–Asp83, Thr87, Asn89–Thr92, Lys107–Ser115, and Ser119 contribute to the 5-phospho-alpha-D-ribose 1-diphosphate site. An anthranilate-binding site is contributed by Gly79. Ser91 lines the Mg(2+) pocket. Anthranilate is bound at residue Asn110. Residue Arg165 coordinates anthranilate. Asp223 and Glu224 together coordinate Mg(2+).

This sequence belongs to the anthranilate phosphoribosyltransferase family. Homodimer. Mg(2+) is required as a cofactor.

It carries out the reaction N-(5-phospho-beta-D-ribosyl)anthranilate + diphosphate = 5-phospho-alpha-D-ribose 1-diphosphate + anthranilate. It functions in the pathway amino-acid biosynthesis; L-tryptophan biosynthesis; L-tryptophan from chorismate: step 2/5. Catalyzes the transfer of the phosphoribosyl group of 5-phosphorylribose-1-pyrophosphate (PRPP) to anthranilate to yield N-(5'-phosphoribosyl)-anthranilate (PRA). The chain is Anthranilate phosphoribosyltransferase from Vibrio parahaemolyticus serotype O3:K6 (strain RIMD 2210633).